We begin with the raw amino-acid sequence, 878 residues long: MVASNNMKGLRAFISDLRSLEHDDEEKRVNVELAKIRAKFQSSTLSAYDRKKYVSKLLYIYMLGYPITFGHMEAAKLLSGTKYSEKLIGYLAVALLLNENHELMKLVINSIKKDLLSHDSLQNSLALHTIANIGGRELCETVYYDIYKLLMSASNENIVRQKSALALLHIYRKFPDLINPEWFEPIVMILGDDDLNVSLAVSNFVNLIVIREPKYQKFAYGKAVGKLKNIVFEHGYSSDYLYYSVPCPWLQVNLCRILLACERPSDNPTRATLIRVLDRILSLPNDNSNVQQVNAVNAILFEAIKLAFLVDESHSLYEKCMDRLADMIADKESNIRYLAFETTAYLISCGHSITSLKHYKELILSSLRYKDVSLRKKSLELLYMMCDEENAKLIVADLLQYLPHLDSVTQEDLISKVAIISETFATDYEWYVDVTIQLLRIAGKSADDGVWHQLVHVIVNNEEIQEYATKRLFSLLQSETIHECLVKAGGYVLGEFGHLITDYPDSQPVHQFSTIYRKLNVSSPSTRVLLLTTLIKLANLQPELNDRIAKVFQEYSTIINPEVQQRACEYLQLLKMPRDFLQLVCDEVPPFLDGNRDGVHPKSRPSSKVNLVDTYPQTIPNVSKPSTPIDVPEYDISACLPGFYRLCWKDKGILYQDSQIQIGVRSEYHNSEGAIYLYYENRQSNTLKSLSSTLIRTFSTFHLATTFQDTNLPSGVQLQQKYVMSGVNEIFEPPIIHVSYVTGVIRSIDLQLPVLLSKFMKPTIFDSYDFFNHWGQMGVEREAQLTFGLNSKDRKLDAKRLTKIVSGFHWGICQNVDSIALNIVGAGIIRFGTQNVGCLLRIEPNYEQNLIRLSIRSTNTSIANTLAKEMQEILRNSF.

Belongs to the adaptor complexes large subunit family. As to quaternary structure, adaptor protein complex 2 (AP-2) is a heterotetramer composed of two large adaptins (alpha-type subunit apl3 and beta-type subunit apl1), a medium chain (mu-type subunit apm4) and a small adaptin (sigma-type subunit aps2).

It localises to the cell membrane. The protein localises to the membrane. Its subcellular location is the coated pit. In terms of biological role, adaptins are components of the adaptor complexes which link clathrin to receptors in coated vesicles. Clathrin-associated protein complexes are believed to interact with the cytoplasmic tails of membrane proteins, leading to their selection and concentration. Alpha adaptin is a subunit of the plasma membrane adaptor. This is AP-2 complex subunit alpha (apl3) from Schizosaccharomyces pombe (strain 972 / ATCC 24843) (Fission yeast).